A 262-amino-acid chain; its full sequence is ATP synthase subunit a 1 (262 aa).

Helical transmembrane passes span 30–50 (TVHIDSLFFSVLTGLAFILVF), 91–111 (IAPLGLTIFCWIMLMNIMDLI), 131–151 (IVPTADVNITMAMALGVFALM), 201–221 (LFGNMFAGEVVFILIAALMPW), and 232–252 (AIFHILIITIQAFVFMMLTIV).

The protein belongs to the ATPase A chain family. In terms of assembly, F-type ATPases have 2 components, CF(1) - the catalytic core - and CF(0) - the membrane proton channel. CF(1) has five subunits: alpha(3), beta(3), gamma(1), delta(1), epsilon(1). CF(0) has three main subunits: a(1), b(2) and c(9-12). The alpha and beta chains form an alternating ring which encloses part of the gamma chain. CF(1) is attached to CF(0) by a central stalk formed by the gamma and epsilon chains, while a peripheral stalk is formed by the delta and b chains.

The protein resides in the cell inner membrane. Its function is as follows. Key component of the proton channel; it plays a direct role in the translocation of protons across the membrane. The protein is ATP synthase subunit a 1 of Photobacterium profundum (strain SS9).